We begin with the raw amino-acid sequence, 85 residues long: Large ribosomal subunit protein bL27 (85 aa).

The segment at 1–22 (MAHKKAGGSTKNGRDSESKRLG) is disordered.

Belongs to the bacterial ribosomal protein bL27 family.

This chain is Large ribosomal subunit protein bL27, found in Idiomarina loihiensis (strain ATCC BAA-735 / DSM 15497 / L2-TR).